The following is a 180-amino-acid chain: uncharacterized protein (180 aa).

Residues 45–180 enclose the N-acetyltransferase domain; the sequence is FVFSQVRTLD…GNRCAFWYAN (136 aa).

Belongs to the acetyltransferase family. Ycf52 subfamily.

This is an uncharacterized protein from Prochlorococcus marinus (strain SARG / CCMP1375 / SS120).